Consider the following 252-residue polypeptide: MSRKPFIAGNWKMNKNPEEAKAFVEAVASKLPSSDLVEAGIAAPALDLTTVLAVAKGSNLKVAAQNCYFENAGAFTGETSPQVLKEIGTDYVVIGHSERRDYFHETDEDINKKAKAIFANGMLPIICCGESLETYEAGKAAEFVGAQVSAALAGLTAEQVAASVIAYEPIWAIGTGKSASQDDAQKMCKVVRDVVAADFGQEVADKVRVQYGGSVKPENVASYMACPDVDGALVGGASLEAESFLALLDFVK.

10-12 serves as a coordination point for substrate; that stretch reads NWK. The active-site Electrophile is His96. Glu168 (proton acceptor) is an active-site residue. Substrate-binding positions include Gly174, Ser214, and 235 to 236; that span reads GG.

Belongs to the triosephosphate isomerase family. In terms of assembly, homodimer.

Its subcellular location is the cytoplasm. It catalyses the reaction D-glyceraldehyde 3-phosphate = dihydroxyacetone phosphate. The protein operates within carbohydrate biosynthesis; gluconeogenesis. Its pathway is carbohydrate degradation; glycolysis; D-glyceraldehyde 3-phosphate from glycerone phosphate: step 1/1. Functionally, involved in the gluconeogenesis. Catalyzes stereospecifically the conversion of dihydroxyacetone phosphate (DHAP) to D-glyceraldehyde-3-phosphate (G3P). The polypeptide is Triosephosphate isomerase (Streptococcus pneumoniae serotype 2 (strain D39 / NCTC 7466)).